Here is a 213-residue protein sequence, read N- to C-terminus: Large ribosomal subunit protein uL4 (213 aa).

The interval 41–75 is disordered; that stretch reads GTASTKTRAEVSRSGKKMYSQKGTGNARHGDRSVP.

The protein belongs to the universal ribosomal protein uL4 family. As to quaternary structure, part of the 50S ribosomal subunit.

In terms of biological role, one of the primary rRNA binding proteins, this protein initially binds near the 5'-end of the 23S rRNA. It is important during the early stages of 50S assembly. It makes multiple contacts with different domains of the 23S rRNA in the assembled 50S subunit and ribosome. Forms part of the polypeptide exit tunnel. This Deinococcus geothermalis (strain DSM 11300 / CIP 105573 / AG-3a) protein is Large ribosomal subunit protein uL4.